The primary structure comprises 78 residues: Probable [Fe-S]-dependent transcriptional repressor (78 aa).

Residues Cys-56, Cys-61, Cys-64, and Cys-70 each coordinate iron-sulfur cluster.

It belongs to the FeoC family.

In terms of biological role, may function as a transcriptional regulator that controls feoABC expression. The sequence is that of Probable [Fe-S]-dependent transcriptional repressor from Enterobacter sp. (strain 638).